Consider the following 475-residue polypeptide: Ribulose bisphosphate carboxylase large chain (475 aa).

A propeptide spanning residues Met1–Ser2 is cleaved from the precursor. Pro3 carries the N-acetylproline modification. At Lys14 the chain carries N6,N6,N6-trimethyllysine. Residues Asn123 and Thr173 each coordinate substrate. Residue Lys175 is the Proton acceptor of the active site. Lys177 contributes to the substrate binding site. Residues Lys201, Asp203, and Glu204 each coordinate Mg(2+). Residue Lys201 is modified to N6-carboxylysine. His294 functions as the Proton acceptor in the catalytic mechanism. Substrate contacts are provided by Arg295, His327, and Ser379.

Belongs to the RuBisCO large chain family. Type I subfamily. Heterohexadecamer of 8 large chains and 8 small chains; disulfide-linked. The disulfide link is formed within the large subunit homodimers. Requires Mg(2+) as cofactor. The disulfide bond which can form in the large chain dimeric partners within the hexadecamer appears to be associated with oxidative stress and protein turnover.

The protein resides in the plastid. It is found in the chloroplast. The catalysed reaction is 2 (2R)-3-phosphoglycerate + 2 H(+) = D-ribulose 1,5-bisphosphate + CO2 + H2O. It carries out the reaction D-ribulose 1,5-bisphosphate + O2 = 2-phosphoglycolate + (2R)-3-phosphoglycerate + 2 H(+). RuBisCO catalyzes two reactions: the carboxylation of D-ribulose 1,5-bisphosphate, the primary event in carbon dioxide fixation, as well as the oxidative fragmentation of the pentose substrate in the photorespiration process. Both reactions occur simultaneously and in competition at the same active site. In Citrus sinensis (Sweet orange), this protein is Ribulose bisphosphate carboxylase large chain.